Here is a 469-residue protein sequence, read N- to C-terminus: ATP synthase subunit beta (469 aa).

155–162 is a binding site for ATP; the sequence is GGAGVGKT.

This sequence belongs to the ATPase alpha/beta chains family. As to quaternary structure, F-type ATPases have 2 components, CF(1) - the catalytic core - and CF(0) - the membrane proton channel. CF(1) has five subunits: alpha(3), beta(3), gamma(1), delta(1), epsilon(1). CF(0) has three main subunits: a(1), b(2) and c(9-12). The alpha and beta chains form an alternating ring which encloses part of the gamma chain. CF(1) is attached to CF(0) by a central stalk formed by the gamma and epsilon chains, while a peripheral stalk is formed by the delta and b chains.

The protein localises to the cell inner membrane. It carries out the reaction ATP + H2O + 4 H(+)(in) = ADP + phosphate + 5 H(+)(out). Its function is as follows. Produces ATP from ADP in the presence of a proton gradient across the membrane. The catalytic sites are hosted primarily by the beta subunits. In Helicobacter pylori (strain ATCC 700392 / 26695) (Campylobacter pylori), this protein is ATP synthase subunit beta.